The sequence spans 632 residues: Extracellular metalloproteinase 5 (632 aa).

An N-terminal signal peptide occupies residues 1–20 (MHGLLLAAGLLSLPLHVLAH). Positions 21 to 244 (PQPGTSLAGR…HNVVDYVSHA (224 aa)) are excised as a propeptide. N-linked (GlcNAc...) asparagine glycosylation is present at Asn-284. His-427 lines the Zn(2+) pocket. The active site involves Glu-428. His-431 contacts Zn(2+). 2 N-linked (GlcNAc...) asparagine glycosylation sites follow: Asn-591 and Asn-620.

It belongs to the peptidase M36 family. The cofactor is Zn(2+).

Its subcellular location is the secreted. Functionally, secreted metalloproteinase probably acting as a virulence factor. The sequence is that of Extracellular metalloproteinase 5 (MEP5) from Arthroderma otae (strain ATCC MYA-4605 / CBS 113480) (Microsporum canis).